Here is a 405-residue protein sequence, read N- to C-terminus: Phosphopentomutase (405 aa).

Positions 10, 303, 308, 344, 345, and 356 each coordinate Mn(2+).

The protein belongs to the phosphopentomutase family. It depends on Mn(2+) as a cofactor.

The protein resides in the cytoplasm. The catalysed reaction is 2-deoxy-alpha-D-ribose 1-phosphate = 2-deoxy-D-ribose 5-phosphate. The enzyme catalyses alpha-D-ribose 1-phosphate = D-ribose 5-phosphate. It participates in carbohydrate degradation; 2-deoxy-D-ribose 1-phosphate degradation; D-glyceraldehyde 3-phosphate and acetaldehyde from 2-deoxy-alpha-D-ribose 1-phosphate: step 1/2. Functionally, isomerase that catalyzes the conversion of deoxy-ribose 1-phosphate (dRib-1-P) and ribose 1-phosphate (Rib-1-P) to deoxy-ribose 5-phosphate (dRib-5-P) and ribose 5-phosphate (Rib-5-P), respectively. The chain is Phosphopentomutase from Shewanella woodyi (strain ATCC 51908 / MS32).